A 556-amino-acid chain; its full sequence is CBS domain-containing protein CBSCBSPB3 (556 aa).

Polar residues-rich tracts occupy residues 1-20 (MSTQATGPSSTSGRRSNSTV) and 30-44 (PVQSENGSVNGNTSK). Residues 1–63 (MSTQATGPSS…SQAPSNGERT (63 aa)) form a disordered region. Ser-2 is subject to N-acetylserine. CBS domains lie at 68–127 (RLSK…RPDQ), 134–189 (MTRN…RMEK), 235–294 (ITDN…LSPE), and 302–360 (MTPN…ENSS). A PB1 domain is found at 414-502 (GNSFSFKFED…KVLRLHLDFT (89 aa)). The chain crosses the membrane as a helical span at residues 527–549 (WVSWRGGVVVTGAVVLTSIAIVV).

It is found in the membrane. This Arabidopsis thaliana (Mouse-ear cress) protein is CBS domain-containing protein CBSCBSPB3 (CBSCBSPB3).